The primary structure comprises 645 residues: Acetyl-coenzyme A synthetase (645 aa).

Residues 190-193 (RGGK) and Thr-308 each bind CoA. ATP is bound by residues 384–386 (GEP), 408–413 (DTWWQT), Asp-497, and Arg-512. Residue Ser-520 coordinates CoA. Arg-523 lines the ATP pocket. 3 residues coordinate Mg(2+): Val-534, His-536, and Ile-539. Residue Lys-606 is modified to N6-acetyllysine.

The protein belongs to the ATP-dependent AMP-binding enzyme family. Requires Mg(2+) as cofactor. In terms of processing, acetylated. Deacetylation by the SIR2-homolog deacetylase activates the enzyme.

The enzyme catalyses acetate + ATP + CoA = acetyl-CoA + AMP + diphosphate. Its function is as follows. Catalyzes the conversion of acetate into acetyl-CoA (AcCoA), an essential intermediate at the junction of anabolic and catabolic pathways. AcsA undergoes a two-step reaction. In the first half reaction, AcsA combines acetate with ATP to form acetyl-adenylate (AcAMP) intermediate. In the second half reaction, it can then transfer the acetyl group from AcAMP to the sulfhydryl group of CoA, forming the product AcCoA. This chain is Acetyl-coenzyme A synthetase, found in Alcanivorax borkumensis (strain ATCC 700651 / DSM 11573 / NCIMB 13689 / SK2).